Consider the following 245-residue polypeptide: 1-(5-phosphoribosyl)-5-[(5-phosphoribosylamino)methylideneamino] imidazole-4-carboxamide isomerase (245 aa).

Asp-11 acts as the Proton acceptor in catalysis. The active-site Proton donor is the Asp-132.

It belongs to the HisA/HisF family.

It is found in the cytoplasm. The catalysed reaction is 1-(5-phospho-beta-D-ribosyl)-5-[(5-phospho-beta-D-ribosylamino)methylideneamino]imidazole-4-carboxamide = 5-[(5-phospho-1-deoxy-D-ribulos-1-ylimino)methylamino]-1-(5-phospho-beta-D-ribosyl)imidazole-4-carboxamide. It functions in the pathway amino-acid biosynthesis; L-histidine biosynthesis; L-histidine from 5-phospho-alpha-D-ribose 1-diphosphate: step 4/9. This is 1-(5-phosphoribosyl)-5-[(5-phosphoribosylamino)methylideneamino] imidazole-4-carboxamide isomerase from Bacillus velezensis (strain DSM 23117 / BGSC 10A6 / LMG 26770 / FZB42) (Bacillus amyloliquefaciens subsp. plantarum).